The primary structure comprises 251 residues: Protein PBMUCL2 (251 aa).

The signal sequence occupies residues 1-22; sequence MPRYVPLLLLLLLLRCSERGGG. 2 disordered regions span residues 36 to 55 and 65 to 251; these read WRDG…DRAS and LSQS…THLL. Over residues 72-87 the composition is skewed to basic and acidic residues; that stretch reads KHPETSPKDSRIREND. An N-linked (GlcNAc...) asparagine glycan is attached at Asn120. Over residues 150–164 the composition is skewed to polar residues; it reads TKDSVTADPGTTENF. The 15 X 11 AA approximate repeats stretch occupies residues 153-251; that stretch reads SVTADPGTTE…TTKHGDTHLL (99 aa). A compositionally biased stretch (basic and acidic residues) spans 241–251; the sequence is ETTKHGDTHLL.

As to expression, detected in the brain, lung, spleen, thymus and prostate.

Its subcellular location is the secreted. The polypeptide is Protein PBMUCL2 (HCG22) (Homo sapiens (Human)).